Here is a 126-residue protein sequence, read N- to C-terminus: Aspartate 1-decarboxylase (126 aa).

Residue S25 is the Schiff-base intermediate with substrate; via pyruvic acid of the active site. Residue S25 is modified to Pyruvic acid (Ser). T57 is a binding site for substrate. The active-site Proton donor is Y58. G73–A75 lines the substrate pocket.

Belongs to the PanD family. In terms of assembly, heterooctamer of four alpha and four beta subunits. Pyruvate serves as cofactor. Post-translationally, is synthesized initially as an inactive proenzyme, which is activated by self-cleavage at a specific serine bond to produce a beta-subunit with a hydroxyl group at its C-terminus and an alpha-subunit with a pyruvoyl group at its N-terminus.

The protein resides in the cytoplasm. The enzyme catalyses L-aspartate + H(+) = beta-alanine + CO2. It participates in cofactor biosynthesis; (R)-pantothenate biosynthesis; beta-alanine from L-aspartate: step 1/1. Its function is as follows. Catalyzes the pyruvoyl-dependent decarboxylation of aspartate to produce beta-alanine. The polypeptide is Aspartate 1-decarboxylase (Xylella fastidiosa (strain M12)).